An 84-amino-acid chain; its full sequence is Magnetosome protein MamR (84 aa).

This sequence belongs to the magnetosome MamR family.

Its subcellular location is the magnetosome. In terms of biological role, may play a role in controlling magnetite number and size but not in control of magnetite morphology. This Paramagnetospirillum magneticum (strain ATCC 700264 / AMB-1) (Magnetospirillum magneticum) protein is Magnetosome protein MamR.